Here is a 777-residue protein sequence, read N- to C-terminus: MNQKILEQLEFQKVKEQFQPYLQTAQGIQELRLLEPSNHYDKISDYFKEIAEMATIFVENHHFSIGNLRDVSESMRRLELEADLNIQELLDIKKLLLVSGEISRFYQDLENVDLQVLKRIFEKIEVFPQLQGSLQAVNDAAFIENFASPELDRLRRQIAENERYSRQLLQDILKKNADYLSESLIASRNGKSVLPVKNTFRHRVSGVVHDISASGNTVYIEPRALVQVNEEMTQLLADERHEIARILKELSQLLRPHSRALANNAWLLGHLDFVRAKYHYLVNNKATIPKISKDKNIQLLNVRHPLLKNPVANDLHFADDLAVIVITGPNTGGKTIMLKTLGLAQLMGQSGLPILADEGSKIAVFDAIYADIGDEQSIEQSLSTFSSHMTHIVDILEESNSNSLVLFDELGAGTDPQEGASLAMAILEQLRLTNIKTMATTHYPELKAYGIESDYVENASMEFDSQSLKPTYRFMQGVPGRSNAFEIARRLGLAETIVKEAEQMTDTDSDVNRIIEELERQTLSSRRRLDHIREVEQENIKFNRAVKKLYNEFSLAKDKEIEKASQEAQAIVELALTESEEILSKLHEKAELKPHEIIEAKSKLKSLVPQRDLSKNKVLKKAKKLREPRIGDDIIVSAYGQRGTLIGQVKGNKWEAQVGLIKMTLKEDEFQLVKVEAEAQKPKKQSINMVKKANQNGPRARLDLRGKRYEEAMQELDAFIDQALVNNMSQVDIIHGIGTGVIREAVTKYLRRHKHVKSFAYAPQNAGGSGCTIATLG.

Position 328–335 (328–335 (GPNTGGKT)) interacts with ATP. In terms of domain architecture, Smr spans 702-777 (LDLRGKRYEE…GSGCTIATLG (76 aa)).

The protein belongs to the DNA mismatch repair MutS family. MutS2 subfamily. As to quaternary structure, homodimer. Binds to stalled ribosomes, contacting rRNA.

Its function is as follows. Endonuclease that is involved in the suppression of homologous recombination and thus may have a key role in the control of bacterial genetic diversity. In terms of biological role, acts as a ribosome collision sensor, splitting the ribosome into its 2 subunits. Detects stalled/collided 70S ribosomes which it binds and splits by an ATP-hydrolysis driven conformational change. Acts upstream of the ribosome quality control system (RQC), a ribosome-associated complex that mediates the extraction of incompletely synthesized nascent chains from stalled ribosomes and their subsequent degradation. Probably generates substrates for RQC. This chain is Endonuclease MutS2, found in Streptococcus uberis (strain ATCC BAA-854 / 0140J).